The following is a 112-amino-acid chain: ATP synthase epsilon chain (112 aa).

The protein belongs to the ATPase epsilon chain family. As to quaternary structure, F-type ATPases have 2 components, CF(1) - the catalytic core - and CF(0) - the membrane proton channel. CF(1) has five subunits: alpha(3), beta(3), gamma(1), delta(1), epsilon(1). CF(0) has three main subunits: a, b and c.

It is found in the cell membrane. Produces ATP from ADP in the presence of a proton gradient across the membrane. The sequence is that of ATP synthase epsilon chain from Rickettsia africae (strain ESF-5).